Reading from the N-terminus, the 136-residue chain is MMPLSRSRLEFIATILQNVLNLGLLTLGLILVVFLGKETVHLADALFVPEQASKYELVEGLVIYFLYFEFIALIVKYFKSGLHFPLRYFVYIGITAIVRLIIVDHKTPMDVLLYPAAILLLVITLWLCNSNRLRRE.

4 consecutive transmembrane segments (helical) span residues 15-35 (ILQNVLNLGLLTLGLILVVFL), 55-75 (YELVEGLVIYFLYFEFIALIV), 83-103 (HFPLRYFVYIGITAIVRLIIV), and 108-128 (PMDVLLYPAAILLLVITLWLC).

The protein belongs to the PsiE family.

Its subcellular location is the cell inner membrane. This chain is Protein PsiE, found in Salmonella gallinarum (strain 287/91 / NCTC 13346).